Reading from the N-terminus, the 204-residue chain is High frequency lysogenization protein HflD homolog (204 aa).

The protein belongs to the HflD family.

The protein resides in the cytoplasm. The protein localises to the cell inner membrane. The sequence is that of High frequency lysogenization protein HflD homolog from Shewanella amazonensis (strain ATCC BAA-1098 / SB2B).